The primary structure comprises 982 residues: Glutamate [NMDA] receptor subunit 1 (982 aa).

The signal sequence occupies residues 1-22 (MRVAFIYRWLLCGAAIVNVLVA). At 23–568 (QRHTASDNPS…TLVSFLQPFS (546 aa)) the chain is on the extracellular side. Asn253, Asn309, Asn340, Asn392, Asn449, Asn476, and Asn496 each carry an N-linked (GlcNAc...) asparagine glycan. Glycine-binding positions include 525–527 (PLT) and Arg532. The helical transmembrane segment at 569-589 (NTLWILVMVSVHVVALVLYLL) threads the bilayer. Topologically, residues 590-646 (DRFSPFGRFKLSHSDSNEEKALNLSSAVWFAWGVLLNSGIGEGTPRSFSARVLGMVW) are cytoplasmic. A helical transmembrane segment spans residues 647–667 (AGFAMIIVASYTANLAAFLVL). At 668–826 (ERPKTKLSGI…KTPNTLGLKN (159 aa)) the chain is on the extracellular side. A glycan (N-linked (GlcNAc...) asparagine) is linked at Asn688. Residues Ser698 and Asp742 each contribute to the glycine site. Residues 827–847 (MAGVFILVGVGIAGGVGLIII) form a helical membrane-spanning segment. Topologically, residues 848 to 982 (EVIYKKHQVK…YTSDVSHLVV (135 aa)) are cytoplasmic. The tract at residues 948-982 (LTASQLGLGKTRPQQNPLPPRYSPGYTSDVSHLVV) is disordered. The span at 972–982 (GYTSDVSHLVV) shows a compositional bias: polar residues.

It belongs to the glutamate-gated ion channel (TC 1.A.10.1) family. Forms a heteromeric NMDA channel with Nmdar2.

It localises to the cell membrane. The protein localises to the postsynaptic cell membrane. It is found in the postsynaptic density. Its function is as follows. NMDA receptor subtype of glutamate-gated ion channels with high calcium permeability and voltage-dependent sensitivity to magnesium. Mediated by glycine. This protein plays a key role in synaptic plasticity, synaptogenesis, excitotoxicity, memory acquisition and learning. It mediates neuronal functions in glutamate neurotransmission. Is involved in the cell surface targeting of NMDA receptors. Plays a role in associative learning and in long-term memory consolidation. The chain is Glutamate [NMDA] receptor subunit 1 from Drosophila grimshawi (Hawaiian fruit fly).